Reading from the N-terminus, the 143-residue chain is Peptide methionine sulfoxide reductase MsrB (143 aa).

Residues 16 to 139 (DAELRRRLTP…NSAALNFEAK (124 aa)) form the MsrB domain. Zn(2+) is bound by residues Cys55, Cys58, Cys104, and Cys107. Cys128 acts as the Nucleophile in catalysis.

It belongs to the MsrB Met sulfoxide reductase family. It depends on Zn(2+) as a cofactor.

The catalysed reaction is L-methionyl-[protein] + [thioredoxin]-disulfide + H2O = L-methionyl-(R)-S-oxide-[protein] + [thioredoxin]-dithiol. This chain is Peptide methionine sulfoxide reductase MsrB, found in Burkholderia thailandensis (strain ATCC 700388 / DSM 13276 / CCUG 48851 / CIP 106301 / E264).